Consider the following 403-residue polypeptide: Phosphoglycerate kinase (403 aa).

Residues 21–23 (DFN), Arg-37, 60–63 (HLGR), Arg-125, and Arg-158 each bind substrate. ATP is bound by residues Lys-209, Glu-332, and 359-362 (GGDS).

This sequence belongs to the phosphoglycerate kinase family. In terms of assembly, monomer.

It is found in the cytoplasm. The enzyme catalyses (2R)-3-phosphoglycerate + ATP = (2R)-3-phospho-glyceroyl phosphate + ADP. It functions in the pathway carbohydrate degradation; glycolysis; pyruvate from D-glyceraldehyde 3-phosphate: step 2/5. The protein is Phosphoglycerate kinase of Koribacter versatilis (strain Ellin345).